Reading from the N-terminus, the 417-residue chain is Glutamyl-tRNA(Gln) amidotransferase subunit D (417 aa).

The 328-residue stretch at 73–400 (EKVWLLATGG…EEVPRVLTTP (328 aa)) folds into the Asparaginase/glutaminase domain. Residues Thr-83, Thr-157, Asp-158, and Lys-236 contribute to the active site.

This sequence belongs to the asparaginase 1 family. GatD subfamily. Heterodimer of GatD and GatE.

It carries out the reaction L-glutamyl-tRNA(Gln) + L-glutamine + ATP + H2O = L-glutaminyl-tRNA(Gln) + L-glutamate + ADP + phosphate + H(+). In terms of biological role, allows the formation of correctly charged Gln-tRNA(Gln) through the transamidation of misacylated Glu-tRNA(Gln) in organisms which lack glutaminyl-tRNA synthetase. The reaction takes place in the presence of glutamine and ATP through an activated gamma-phospho-Glu-tRNA(Gln). The GatDE system is specific for glutamate and does not act on aspartate. This is Glutamyl-tRNA(Gln) amidotransferase subunit D from Pyrobaculum aerophilum (strain ATCC 51768 / DSM 7523 / JCM 9630 / CIP 104966 / NBRC 100827 / IM2).